The sequence spans 107 residues: Replication initiation control protein YabA (107 aa).

Residues H81, C83, C97, and C100 each contribute to the Zn(2+) site.

Belongs to the YabA family. In terms of assembly, homotetramer. Interacts with both DnaA and DnaN, acting as a bridge between these two proteins. It depends on Zn(2+) as a cofactor.

The protein resides in the cytoplasm. It localises to the nucleoid. Functionally, involved in control of chromosome replication initiation. Inhibits the cooperative binding of DnaA to the oriC region, thus negatively regulating initiation of chromosome replication. Inhibits the ability of DnaA-ATP to form a helix on DNA; does not disassemble preformed DnaA-DNA helices. Decreases the residence time of DnaA on the chromosome at its binding sites (oriC, replication forks and promoter-binding sites). Tethers DnaA to the replication machinery via the DNA polymerase beta sliding clamp subunit (dnaN). Associates with oriC and other DnaA targets on the chromosome in a DnaA-dependent manner. This Streptococcus pyogenes serotype M18 (strain MGAS8232) protein is Replication initiation control protein YabA.